A 3948-amino-acid polypeptide reads, in one-letter code: Hybrid PKS-NRPS synthetase ucsA (3948 aa).

One can recognise a Ketosynthase family 3 (KS3) domain in the interval 11-440 (NEPIAVIGSG…GTNAHAILER (430 aa)). Catalysis depends on for beta-ketoacyl synthase activity residues C184, H323, and H363. The segment at 548–881 (IFTGQGAQWP…FSTAIGQLWA (334 aa)) is malonyl-CoA:ACP transacylase (MAT) domain. Positions 940–1079 (HPLLGTLGAD…GHIRLTITDF (140 aa)) are N-terminal hotdog fold. The tract at residues 940 to 1254 (HPLLGTLGAD…IRLIPFAAAS (315 aa)) is dehydratase (DH) domain. One can recognise a PKS/mFAS DH domain in the interval 940 to 1256 (HPLLGTLGAD…LIPFAAASEA (317 aa)). H972 functions as the Proton acceptor; for dehydratase activity in the catalytic mechanism. The interval 1098-1256 (MTEVDQNLFY…LIPFAAASEA (159 aa)) is C-terminal hotdog fold. Residue D1161 is the Proton donor; for dehydratase activity of the active site. The methyltransferase (MT) domain stretch occupies residues 1299 to 1460 (LAHVVGQITH…LRAGFTGVET (162 aa)). The tract at residues 1989–2165 (TYILFGLAGA…ASVIDIGPIS (177 aa)) is ketoreductase (KR) domain. Residues 2275 to 2357 (DVARVLRHAI…GLVDFAVDNL (83 aa)) form the Carrier 1 domain. The residue at position 2317 (S2317) is an O-(pantetheine 4'-phosphoryl)serine. Residues 2381-2404 (PKAKTDAPAAAPTPASATAPGSKS) show a composition bias toward low complexity. Positions 2381–2473 (PKAKTDAPAA…SSQAASLESS (93 aa)) are disordered. Composition is skewed to polar residues over residues 2405 to 2418 (DGNV…ADQS) and 2426 to 2437 (PQPTAILTNATA). Residues 2441-2456 (PVSPSLSVTGSTSSAA) show a composition bias toward low complexity. The segment covering 2462 to 2473 (PTSSQAASLESS) has biased composition (polar residues). Residues 2489 to 2926 (EKTLPMSYGQ…PQIFNSSKVQ (438 aa)) form a condensation (C) domain region. The adenylation (A) (KR) domain stretch occupies residues 2950–3355 (DIAAVQPTLT…GEFVLQARIK (406 aa)). Residues 3483-3507 (PLTNKGGLKETPVARPTRYQNDPIP) form a disordered region. The region spanning 3513 to 3592 (SSPFSSLDQV…QMASLLDGKD (80 aa)) is the Carrier 2 domain. Residue S3552 is modified to O-(pantetheine 4'-phosphoryl)serine. Residues 3633 to 3852 (LTGATGFLGL…QFVPVEDVAN (220 aa)) are reductase (R) domain.

This sequence in the C-terminal section; belongs to the NRP synthetase family.

Its pathway is mycotoxin biosynthesis. Its function is as follows. Hybrid PKS-NRPS synthetase; part of the gene cluster that mediates the biosynthesis of UCS1025A, a member of the pyrrolizidinone family that acts as a strong telomerase inhibitor and displays potent antibacterial and antitumor properties. These compounds share a hemiaminal-containing pyrrolizidinone core fused with a gamma-lactone, giving a furopyrrolizidine that is connected to a decalin fragment. The polyketide synthase module (PKS) of the PKS-NRPS ucsA is responsible for the synthesis of the polyketide backbone via the condensation of an acetyl-CoA starter unit with 6 malonyl-CoA units. The downstream nonribosomal peptide synthetase (NRPS) module then amidates the carboxyl end of the polyketide with a 2S,3S-methylproline derived from L-isoleucine by the 2-oxoglutarate-dependent dioxygenase ucsF which converts L-isoleucine to (4S,5S)-4-methylpyrroline-5-carboxylate that is further converted to 2S,3S-methylproline by the pyrroline-5-carboxylate reductase ucsG. Reductive release of the completed aminoacyl polyketide from the assembly line can form the 3-pyrrolin-2-one structure via an intramolecular Knoevenagel reaction. Because ucsA lacks a designated enoylreductase (ER) domain, the required activity is provided the enoyl reductase ucsL. This keto acyclic precursor is the substrate of the Diels-Alderase ucsH, that catalyzes the Diels-Alder cycloaddition. Oxidation of the 3S-methyl group to a carboxylate by the cytochrome P450 monooxygenase ucsK allows an oxa-Michael cyclization that might involve the reductase/dehydrogenase ucsI and which furnishes the furopyrrolizidine. The oxidase ucsJ likely plays a critical role in stereoselective reduction of the C5-C6 double bond to afford the required R-configured carboxylate group. Further enolization and oxidation at C5 by an unidentified enzyme affords the last intermediate that can undergo oxa-Michael cyclization to yield UCS1025A. The sequence is that of Hybrid PKS-NRPS synthetase ucsA from Acremonium sp.